We begin with the raw amino-acid sequence, 323 residues long: Nucleotide-binding protein ZMO1325 (323 aa).

Position 25 to 32 (25 to 32 (GLSGAGKS)) interacts with ATP. Residue 78 to 81 (DSRT) participates in GTP binding.

Belongs to the RapZ-like family.

Displays ATPase and GTPase activities. This Zymomonas mobilis subsp. mobilis (strain ATCC 31821 / ZM4 / CP4) protein is Nucleotide-binding protein ZMO1325.